We begin with the raw amino-acid sequence, 216 residues long: Cytidylate kinase (216 aa).

Residue 7–15 (GPSGTGKST) participates in ATP binding.

This sequence belongs to the cytidylate kinase family. Type 1 subfamily.

It is found in the cytoplasm. It catalyses the reaction CMP + ATP = CDP + ADP. It carries out the reaction dCMP + ATP = dCDP + ADP. In Chlamydia trachomatis serovar L2 (strain ATCC VR-902B / DSM 19102 / 434/Bu), this protein is Cytidylate kinase.